The following is a 235-amino-acid chain: Orotidine 5'-phosphate decarboxylase (235 aa).

Residues D12, K34, 61–70, T121, R182, Q191, G211, and R212 contribute to the substrate site; that span reads DLKFHDIPNT. The active-site Proton donor is K63.

This sequence belongs to the OMP decarboxylase family. Type 1 subfamily. As to quaternary structure, homodimer.

It carries out the reaction orotidine 5'-phosphate + H(+) = UMP + CO2. Its pathway is pyrimidine metabolism; UMP biosynthesis via de novo pathway; UMP from orotate: step 2/2. Its function is as follows. Catalyzes the decarboxylation of orotidine 5'-monophosphate (OMP) to uridine 5'-monophosphate (UMP). This chain is Orotidine 5'-phosphate decarboxylase, found in Marinomonas sp. (strain MWYL1).